A 369-amino-acid chain; its full sequence is Choline kinase B2 (369 aa).

It belongs to the choline/ethanolamine kinase family. The cofactor is Mg(2+).

The enzyme catalyses choline + ATP = phosphocholine + ADP + H(+). It participates in phospholipid metabolism; phosphatidylcholine biosynthesis; phosphocholine from choline: step 1/1. In terms of biological role, catalyzes the first step in phosphatidylcholine biosynthesis. Phosphorylates choline. The polypeptide is Choline kinase B2 (ckb-2) (Caenorhabditis elegans).